The primary structure comprises 160 residues: UPF0178 protein XC_1827 (160 aa).

The protein belongs to the UPF0178 family.

The sequence is that of UPF0178 protein XC_1827 from Xanthomonas campestris pv. campestris (strain 8004).